Consider the following 484-residue polypeptide: RNA polymerase sigma-54 factor 1 (484 aa).

The H-T-H motif DNA-binding region spans N355–T374. The short motif at A444–R452 is the RPON box element. Residues R464–K484 are disordered. Polar residues predominate over residues M468–S477.

The protein belongs to the sigma-54 factor family.

Functionally, sigma factors are initiation factors that promote the attachment of RNA polymerase to specific initiation sites and are then released. This sigma factor is responsible for the expression of the nitrogen fixation genes. The protein is RNA polymerase sigma-54 factor 1 (rpoN1) of Bradyrhizobium diazoefficiens (strain JCM 10833 / BCRC 13528 / IAM 13628 / NBRC 14792 / USDA 110).